Consider the following 276-residue polypeptide: Phosphonoacetaldehyde hydrolase (276 aa).

Asp-19 serves as the catalytic Nucleophile. Residues Asp-19 and Ala-21 each contribute to the Mg(2+) site. Lys-60 (schiff-base intermediate with substrate) is an active-site residue. Asp-193 provides a ligand contact to Mg(2+).

The protein belongs to the HAD-like hydrolase superfamily. PhnX family. Homodimer. The cofactor is Mg(2+).

It carries out the reaction phosphonoacetaldehyde + H2O = acetaldehyde + phosphate + H(+). Its function is as follows. Involved in phosphonate degradation. The chain is Phosphonoacetaldehyde hydrolase from Bordetella bronchiseptica (strain ATCC BAA-588 / NCTC 13252 / RB50) (Alcaligenes bronchisepticus).